The following is a 467-amino-acid chain: 3-isopropylmalate dehydratase large subunit (467 aa).

Cysteine 348, cysteine 409, and cysteine 412 together coordinate [4Fe-4S] cluster.

The protein belongs to the aconitase/IPM isomerase family. LeuC type 1 subfamily. Heterodimer of LeuC and LeuD. [4Fe-4S] cluster is required as a cofactor.

It catalyses the reaction (2R,3S)-3-isopropylmalate = (2S)-2-isopropylmalate. Its pathway is amino-acid biosynthesis; L-leucine biosynthesis; L-leucine from 3-methyl-2-oxobutanoate: step 2/4. Its function is as follows. Catalyzes the isomerization between 2-isopropylmalate and 3-isopropylmalate, via the formation of 2-isopropylmaleate. The sequence is that of 3-isopropylmalate dehydratase large subunit from Magnetococcus marinus (strain ATCC BAA-1437 / JCM 17883 / MC-1).